Consider the following 511-residue polypeptide: Ectonucleoside triphosphate diphosphohydrolase 1 (511 aa).

At 1-16 the chain is on the cytoplasmic side; it reads MEDIKDSKVKRFCSKN. A helical membrane pass occupies residues 17–37; that stretch reads ILIILGFSSVLAVIALIAVGL. Residues 38–478 lie on the Extracellular side of the membrane; sequence THNKPLPENV…LSPPLPHSTY (441 aa). The interval 46–171 is N-terminal lobe; the sequence is NVKYGIVLDA…DFQGAKIITG (126 aa). Asparagine 73 carries N-linked (GlcNAc...) asparagine glycosylation. A disulfide bond links cysteine 84 and cysteine 108. The active-site Proton acceptor is the glutamate 174. Positions 205–441 are C-terminal lobe; that stretch reads QATFGALDLG…GTSWDQIHFM (237 aa). Asparagine 226, asparagine 291, and asparagine 333 each carry an N-linked (GlcNAc...) asparagine glycan. 2 disulfide bridges follow: cysteine 254–cysteine 300 and cysteine 281–cysteine 324. Cysteine 337 and cysteine 342 are joined by a disulfide. N-linked (GlcNAc...) asparagine glycosylation is present at asparagine 374. Residues cysteine 391 and cysteine 414 are joined by a disulfide bond. N-linked (GlcNAc...) asparagine glycans are attached at residues asparagine 429 and asparagine 458. The chain crosses the membrane as a helical span at residues 479 to 499; it reads ISLMVLFSLVLVAMVITGLFI. The Cytoplasmic segment spans residues 500–511; sequence FSKPSYFWKEAV.

It belongs to the GDA1/CD39 NTPase family. As to quaternary structure, homodimer; disulfide-linked. It depends on Ca(2+) as a cofactor. The cofactor is Mg(2+). Post-translationally, N-glycosylated. In terms of processing, the N-terminus is blocked. Palmitoylated on Cys-13; which is required for caveola targeting. As to expression, expressed in primary neurons and astrocytes, kidney, liver, muscle, thymus, lung and spleen.

Its subcellular location is the membrane. It is found in the caveola. It catalyses the reaction a ribonucleoside 5'-triphosphate + 2 H2O = a ribonucleoside 5'-phosphate + 2 phosphate + 2 H(+). The enzyme catalyses a ribonucleoside 5'-triphosphate + H2O = a ribonucleoside 5'-diphosphate + phosphate + H(+). The catalysed reaction is a ribonucleoside 5'-diphosphate + H2O = a ribonucleoside 5'-phosphate + phosphate + H(+). It carries out the reaction ATP + 2 H2O = AMP + 2 phosphate + 2 H(+). It catalyses the reaction ATP + H2O = ADP + phosphate + H(+). The enzyme catalyses ADP + H2O = AMP + phosphate + H(+). The catalysed reaction is CTP + 2 H2O = CMP + 2 phosphate + 2 H(+). It carries out the reaction CTP + H2O = CDP + phosphate + H(+). It catalyses the reaction CDP + H2O = CMP + phosphate + H(+). The enzyme catalyses GTP + 2 H2O = GMP + 2 phosphate + 2 H(+). The catalysed reaction is GTP + H2O = GDP + phosphate + H(+). It carries out the reaction GDP + H2O = GMP + phosphate + H(+). It catalyses the reaction ITP + 2 H2O = IMP + 2 phosphate + 2 H(+). The enzyme catalyses ITP + H2O = IDP + phosphate + H(+). The catalysed reaction is IDP + H2O = IMP + phosphate + H(+). It carries out the reaction UTP + 2 H2O = UMP + 2 phosphate + 2 H(+). It catalyses the reaction UTP + H2O = UDP + phosphate + H(+). The enzyme catalyses UDP + H2O = UMP + phosphate + H(+). Functionally, catalyzes the hydrolysis of both di- and triphosphate nucleotides (NDPs and NTPs) and hydrolyze NTPs to nucleotide monophosphates (NMPs) in two distinct successive phosphate-releasing steps, with NDPs as intermediates and participates in the regulation of extracellular levels of nucleotides. By hydrolyzing proinflammatory ATP and platelet-activating ADP to AMP, it blocks platelet aggregation and supports blood flow. This is Ectonucleoside triphosphate diphosphohydrolase 1 from Rattus norvegicus (Rat).